Consider the following 580-residue polypeptide: Bifunctional lycopene cyclase/phytoene synthase (580 aa).

3 helical membrane-spanning segments follow: residues 3 to 23, 35 to 55, and 65 to 85; these read WEYA…LAAV, KLVF…SYLI, and GVVV…FFVI. Asn-89 carries an N-linked (GlcNAc...) asparagine glycan. Helical transmembrane passes span 116-136, 139-159, 171-191, and 214-234; these read IAGQ…VSSG, GMYM…LWSI, NTAL…TFAL, and IEEA…LIAC.

It in the N-terminal section; belongs to the lycopene beta-cyclase family. This sequence in the C-terminal section; belongs to the phytoene/squalene synthase family.

Its subcellular location is the membrane. The enzyme catalyses all-trans-lycopene = gamma-carotene. It carries out the reaction gamma-carotene = all-trans-beta-carotene. It catalyses the reaction 2 (2E,6E,10E)-geranylgeranyl diphosphate = 15-cis-phytoene + 2 diphosphate. It participates in carotenoid biosynthesis; beta-carotene biosynthesis. It functions in the pathway carotenoid biosynthesis; phytoene biosynthesis; all-trans-phytoene from geranylgeranyl diphosphate: step 1/1. In terms of biological role, bifunctional enzyme; part of the car gene cluster that mediates the biosynthesis of neurosporaxanthin, a carboxylic apocarotenoid acting as an essential protective pigments and leading to orange pigmentation. CarAR catalyzes the first step of the pathway by converting geranylgeranyl diphosphate to phytoene, as well as the later cyclization step that transforms the carB product lycopene into gamma-carotene. CarAR also converts part of gamma-carotene into beta-carotene. Neurosporaxanthin is synthesized from geranyl-geranyl pyrophosphate (GGPP) through several enzymatic activities. Phytoene synthase activity performed by the bifunctional enzyme carAR first produces phytoene from geranyl-geranyl pyrophosphate (GGPP). The phytoene dehydrogenase carB then introduces 4 desaturations to lead to lycopene which is substrate of the carotene cyclase activity of carAR that leads to the production of gamma-carotene. CarB then performs a 5th desaturation reaction to yield torulene. Torulene is the substrate of the dioxidase carT that breaks the molecule, removing five carbon atoms to yield beta-apo-4'-carotenal, whereas the aldehyde dehydrogenase carD mediates the last step by converting beta-apo-4'-carotenal into neurosporaxanthin. This chain is Bifunctional lycopene cyclase/phytoene synthase, found in Gibberella fujikuroi (strain CBS 195.34 / IMI 58289 / NRRL A-6831) (Bakanae and foot rot disease fungus).